An 88-amino-acid polypeptide reads, in one-letter code: uncharacterized protein (88 aa).

Residues 1 to 22 (MLKASILFITISLTLMLENSYG) form the signal peptide. Intrachain disulfides connect C59–C73, C66–C77, and C72–C82.

The protein resides in the secreted. This is an uncharacterized protein from Schistosoma japonicum (Blood fluke).